The following is a 632-amino-acid chain: Maltase 1 (632 aa).

Basic and acidic residues predominate over residues 1-29; it reads MEEGERWREGHVYQRSSETRKPTNYDRPD. The disordered stretch occupies residues 1–30; that stretch reads MEEGERWREGHVYQRSSETRKPTNYDRPDS. 2 N-linked (GlcNAc...) asparagine glycosylation sites follow: Asn-179 and Asn-212. Asp-280 (nucleophile) is an active-site residue. A glycan (N-linked (GlcNAc...) asparagine) is linked at Asn-333. Residue Glu-348 is the Proton donor of the active site. N-linked (GlcNAc...) asparagine glycosylation is found at Asn-461, Asn-575, and Asn-578.

This sequence belongs to the glycosyl hydrolase 13 family.

It carries out the reaction Hydrolysis of terminal, non-reducing (1-&gt;4)-linked alpha-D-glucose residues with release of alpha-D-glucose.. The sequence is that of Maltase 1 (Mal-B1) from Drosophila virilis (Fruit fly).